We begin with the raw amino-acid sequence, 1165 residues long: Peroxisomal ATPase PEX6 (1165 aa).

The protein belongs to the AAA ATPase family. As to quaternary structure, interacts with PEX1; forming the PEX1-PEX6 AAA ATPase complex, which is composed of a heterohexamer formed by a trimer of PEX1-PEX6 dimers.

The protein resides in the membrane. It carries out the reaction ATP + H2O = ADP + phosphate + H(+). Functionally, component of the PEX1-PEX6 AAA ATPase complex involved in peroxisome biosynthesis. The complex acts as a protein dislocase complex that mediates the ATP-dependent extraction of the PEX5 receptor from peroxisomal membranes, an essential step for PEX5 recycling. Specifically recognizes PEX5 monoubiquitinated at 'Cys-6', and pulls it out of the peroxisome lumen through the PEX2-PEX10-PEX12 retrotranslocation channel. Extraction by the PEX1-PEX6 AAA ATPase complex is accompanied by unfolding of the TPR repeats and release of bound cargo from PEX5. The polypeptide is Peroxisomal ATPase PEX6 (Komagataella pastoris (Yeast)).